A 492-amino-acid polypeptide reads, in one-letter code: MTLWINGDWVTGQGALRVKRNPVSGEVLWQGNDADAAQVGQACRAARAAFPRWARLSFGDRQVRVERFAGLLESNKAELTAIIARETGKPRWEAATEVTAMINKIAISIKAYHVRTGEQRSEMPDGAASLRHRPHGVLAVFGPYNFPGHLPNGHIVPALLAGNTIIFKPSELTPWSGDAVMRLWQQAGLPPGVLNLVQGGRATGQALSALEDLDGLLFTGSANTGYQLHRQLSGQPEKILALEMGGNNPLIIDEVADIDAAVHLTIQSAFVTAGQRCTCARRLFLKSGTQGDAFLARLVAVSQRLTPGTWDDEPQPFIGGLISEQAAQQVVTAWQELEAMGGRTLLAPRLLQAGTSLLTPGIIEMTGVTGLPDEEVFGPLLRVWRYDTFDEAIRMANNTRFGLSCGLVSPEREKFDQLLLEARAGIVNWNKPLTGAASTAPFGGIGASGNHRPSAWYAADYCAWPMASLESDSLTLPATLNPGLDFSDEVVR.

220–225 contributes to the NAD(+) binding site; that stretch reads GSANTG. Residues glutamate 243 and cysteine 277 contribute to the active site.

It belongs to the aldehyde dehydrogenase family. AstD subfamily.

The catalysed reaction is N-succinyl-L-glutamate 5-semialdehyde + NAD(+) + H2O = N-succinyl-L-glutamate + NADH + 2 H(+). The protein operates within amino-acid degradation; L-arginine degradation via AST pathway; L-glutamate and succinate from L-arginine: step 4/5. In terms of biological role, catalyzes the NAD-dependent reduction of succinylglutamate semialdehyde into succinylglutamate. This Escherichia coli O6:K15:H31 (strain 536 / UPEC) protein is N-succinylglutamate 5-semialdehyde dehydrogenase.